The chain runs to 362 residues: Very-long-chain (3R)-3-hydroxyacyl-CoA dehydratase 3 (362 aa).

M1 carries the post-translational modification N-acetylmethionine. The Cytoplasmic segment spans residues 1-149; the sequence is METQVLTPHV…ETLTNLKKGY (149 aa). The CS domain occupies 5–94; that stretch reads VLTPHVYWAQ…KGSHWWERLT (90 aa). T7 carries the post-translational modification Phosphothreonine. The stretch at 111-138 forms a coiled coil; the sequence is LDESDAEMELRAKEEERLNKLRLEREGS. At S114 the chain carries Phosphoserine. The helical transmembrane segment at 150–170 threads the bilayer; the sequence is LFMYNLVQLLGFSWIFVNLTV. The Lumenal segment spans residues 171 to 189; that stretch reads RFFILGKESFYDTFHNVAD. Residues 190 to 210 traverse the membrane as a helical segment; sequence MMYFCQMLALVETLNAAIGVT. The Cytoplasmic segment spans residues 211 to 212; that stretch reads ST. The chain crosses the membrane as a helical span at residues 213 to 233; sequence PVLPALIQFLGRNFILFLVFG. Residues 234–242 lie on the Lumenal side of the membrane; sequence TMEEMQNKA. A helical transmembrane segment spans residues 243 to 263; it reads VVFFVFYSWSAIEIFRYPFYM. The Cytoplasmic segment spans residues 264 to 280; that stretch reads LSCIDMDWKVLTWLRYT. A helical transmembrane segment spans residues 281 to 301; it reads MWIPLYPLGCLSEAVAVIQSI. Active-site residues include Y286 and E293. Residues 302–322 are Lumenal-facing; the sequence is PVFNESGRFSFTLPYPVKMKV. A helical membrane pass occupies residues 323–343; sequence RFSFFLQVYLVMLFLGLYINF. The Cytoplasmic portion of the chain corresponds to 344 to 362; it reads RHLYKQRRRRYGQKKKKLH.

Belongs to the very long-chain fatty acids dehydratase HACD family. As to quaternary structure, may interact with enzymes of the ELO family (including ELOVL1); with those enzymes that mediate condensation, the first of the four steps of the reaction cycle responsible for fatty acids elongation, may be part of a larger fatty acids elongase complex. Interacts with RAC1. Associates with internalized insulin receptor/INSR complexes on Golgi/endosomal membranes; HACD3/PTPLAD1 together with ATIC and PRKAA2/AMPK2 is proposed to be part of a signaling network regulating INSR autophosphorylation and endocytosis.

It localises to the endoplasmic reticulum membrane. It carries out the reaction a very-long-chain (3R)-3-hydroxyacyl-CoA = a very-long-chain (2E)-enoyl-CoA + H2O. The enzyme catalyses (3R)-hydroxyhexadecanoyl-CoA = (2E)-hexadecenoyl-CoA + H2O. It functions in the pathway lipid metabolism; fatty acid biosynthesis. Catalyzes the third of the four reactions of the long-chain fatty acids elongation cycle. This endoplasmic reticulum-bound enzymatic process, allows the addition of two carbons to the chain of long- and very long-chain fatty acids/VLCFAs per cycle. This enzyme catalyzes the dehydration of the 3-hydroxyacyl-CoA intermediate into trans-2,3-enoyl-CoA, within each cycle of fatty acid elongation. Thereby, it participates in the production of VLCFAs of different chain lengths that are involved in multiple biological processes as precursors of membrane lipids and lipid mediators. Involved in Rac1-signaling pathways leading to the modulation of gene expression. Promotes insulin receptor/INSR autophosphorylation and is involved in INSR internalization. This is Very-long-chain (3R)-3-hydroxyacyl-CoA dehydratase 3 from Mus musculus (Mouse).